The sequence spans 306 residues: Large ribosomal subunit protein mL45 (306 aa).

This sequence belongs to the mitochondrion-specific ribosomal protein mL45 family. As to quaternary structure, component of the mitochondrial ribosome large subunit (39S) which comprises a 16S rRNA and about 50 distinct proteins.

The protein resides in the mitochondrion. Its function is as follows. Component of the mitochondrial large ribosomal subunit (mt-LSU). Within the mitochondrial ribosomes, required to direct the nascent polypeptide toward the tunnel exit and position the exit at a distance from the membrane surface. The sequence is that of Large ribosomal subunit protein mL45 (MRPL45) from Bos taurus (Bovine).